The following is a 312-amino-acid chain: Tetraacyldisaccharide 4'-kinase (312 aa).

I60 to T67 serves as a coordination point for ATP.

Belongs to the LpxK family.

The catalysed reaction is a lipid A disaccharide + ATP = a lipid IVA + ADP + H(+). The protein operates within glycolipid biosynthesis; lipid IV(A) biosynthesis; lipid IV(A) from (3R)-3-hydroxytetradecanoyl-[acyl-carrier-protein] and UDP-N-acetyl-alpha-D-glucosamine: step 6/6. In terms of biological role, transfers the gamma-phosphate of ATP to the 4'-position of a tetraacyldisaccharide 1-phosphate intermediate (termed DS-1-P) to form tetraacyldisaccharide 1,4'-bis-phosphate (lipid IVA). The polypeptide is Tetraacyldisaccharide 4'-kinase (Helicobacter pylori (strain J99 / ATCC 700824) (Campylobacter pylori J99)).